A 412-amino-acid polypeptide reads, in one-letter code: Zinc finger protein 260 (412 aa).

13 C2H2-type zinc fingers span residues 27–49 (YECN…KKMH), 55–77 (HECT…LRSH), 83–105 (YKCN…QKHH), 136–158 (YACK…EKIH), 164–186 (FECN…QNIH), 192–214 (FKCS…QRIH), 220–242 (YECK…QRSH), 248–270 (YTCK…EKIH), 276–298 (YKCN…HNIH), 304–326 (YECN…VRIH), 332–354 (YECK…MRSH), 360–382 (YGCN…MRIH), and 388–412 (YQCS…IHTH).

This sequence belongs to the krueppel C2H2-type zinc-finger protein family. As to quaternary structure, binds DNA. Interacts with GATA4.

Its subcellular location is the nucleus. Functionally, transcription factor that acts as a cardiac regulator and an effector of alpha1-adrenergic signaling. Binds to PE response elements (PERE) present in the promoter of genes such as ANF/NPPA and acts as a direct transcriptional activator of NPPA. Also acts as a cofactor with GATA4, a key cardiac regulator. The sequence is that of Zinc finger protein 260 (ZNF260) from Homo sapiens (Human).